A 1269-amino-acid polypeptide reads, in one-letter code: Rho GTPase-activating protein 29 (1269 aa).

Residues serine 171, serine 176, serine 179, and serine 190 each carry the phosphoserine modification. The 271-residue stretch at isoleucine 192–glutamate 462 folds into the F-BAR domain. Residues arginine 296 to valine 418 are a coiled coil. 2 disordered regions span residues serine 472–aspartate 523 and aspartate 540–glycine 599. A phosphoserine mark is found at serine 499, serine 519, and serine 552. Positions aspartate 540–serine 559 are enriched in low complexity. The segment at threonine 612–cysteine 657 adopts a Phorbol-ester/DAG-type zinc-finger fold. In terms of domain architecture, Rho-GAP spans alanine 671–phenylalanine 886. Residues proline 909–lysine 936 form a disordered region. At serine 918 the chain carries Phosphoserine. Residues proline 919–methionine 928 are compositionally biased toward basic and acidic residues. A phosphoserine mark is found at serine 954 and serine 1026. Residues arginine 1120 to valine 1269 form a disordered region. The segment covering serine 1128 to glutamine 1145 has biased composition (polar residues). Phosphoserine is present on residues serine 1152 and serine 1154. Residues threonine 1162 to threonine 1172 are compositionally biased toward polar residues. Over residues serine 1229–proline 1241 the composition is skewed to basic and acidic residues. Over residues glutamate 1259–valine 1269 the composition is skewed to acidic residues. The interaction with PTPN13/PTPL1 stretch occupies residues proline 1266–valine 1269.

In terms of assembly, interacts with PTPN13/PTPL1. Interacts with RAP2A via its coiled coil domain. Interacts with RASIP1.

Its function is as follows. GTPase activator for the Rho-type GTPases by converting them to an inactive GDP-bound state. Has strong activity toward RHOA, and weaker activity toward RAC1 and CDC42. May act as a specific effector of RAP2A to regulate Rho. In concert with RASIP1, suppresses RhoA signaling and dampens ROCK and MYH9 activities in endothelial cells and plays an essential role in blood vessel tubulogenesis. This Bos taurus (Bovine) protein is Rho GTPase-activating protein 29 (ARHGAP29).